The primary structure comprises 599 residues: Aspartate--tRNA(Asp/Asn) ligase (599 aa).

Glu183 contacts L-aspartate. The interval 207–210 is aspartate; sequence QIFK. Arg229 contacts L-aspartate. ATP contacts are provided by residues 229–231 and Gln238; that span reads RDE. Residue His456 coordinates L-aspartate. ATP is bound at residue Glu490. An L-aspartate-binding site is contributed by Arg497. 542–545 is a binding site for ATP; it reads GLDR.

Belongs to the class-II aminoacyl-tRNA synthetase family. Type 1 subfamily. In terms of assembly, homodimer.

It is found in the cytoplasm. The enzyme catalyses tRNA(Asx) + L-aspartate + ATP = L-aspartyl-tRNA(Asx) + AMP + diphosphate. Aspartyl-tRNA synthetase with relaxed tRNA specificity since it is able to aspartylate not only its cognate tRNA(Asp) but also tRNA(Asn). Reaction proceeds in two steps: L-aspartate is first activated by ATP to form Asp-AMP and then transferred to the acceptor end of tRNA(Asp/Asn). This chain is Aspartate--tRNA(Asp/Asn) ligase, found in Protochlamydia amoebophila (strain UWE25).